A 71-amino-acid chain; its full sequence is Exodeoxyribonuclease 7 small subunit (71 aa).

The protein belongs to the XseB family. As to quaternary structure, heterooligomer composed of large and small subunits.

It is found in the cytoplasm. The enzyme catalyses Exonucleolytic cleavage in either 5'- to 3'- or 3'- to 5'-direction to yield nucleoside 5'-phosphates.. Bidirectionally degrades single-stranded DNA into large acid-insoluble oligonucleotides, which are then degraded further into small acid-soluble oligonucleotides. This is Exodeoxyribonuclease 7 small subunit from Clostridium botulinum (strain Loch Maree / Type A3).